Reading from the N-terminus, the 452-residue chain is Dimethyladenosine transferase 2, mitochondrial (452 aa).

3 residues coordinate S-adenosyl-L-methionine: isoleucine 46, glutamate 99, and aspartate 125. A disordered region spans residues 408-452 (ANDEPNLEDGVTLPEEDDAEADEIIEEESPVPATTPVKRRRKASS). The span at 421–436 (PEEDDAEADEIIEEES) shows a compositional bias: acidic residues.

This sequence belongs to the class I-like SAM-binding methyltransferase superfamily. rRNA adenine N(6)-methyltransferase family. KsgA subfamily.

The protein resides in the mitochondrion. Functionally, probable S-adenosyl-L-methionine-dependent methyltransferase which specifically dimethylates mitochondrial 12S rRNA at the conserved stem loop. Also required for basal transcription of mitochondrial DNA. Also regulates mitochondrial DNA copy number. Stimulates transcription independently of the methyltransferase activity. The polypeptide is Dimethyladenosine transferase 2, mitochondrial (mtTFB2) (Drosophila melanogaster (Fruit fly)).